We begin with the raw amino-acid sequence, 940 residues long: UvrABC system protein A (940 aa).

An ATP-binding site is contributed by 33-40 (GVSGSGKS). The C4-type zinc-finger motif lies at 252 to 279 (CPVCGFTVPELEPRLFSFNAPFGSCPDC). ABC transporter domains lie at 309–586 (WYGK…KKSL) and 606–935 (IDKK…QYLK). An ATP-binding site is contributed by 639-646 (GVSGSGKS). A C4-type zinc finger spans residues 738 to 764 (CEACSGDGIIKIEMHFLPDVYVPCEVC).

It belongs to the ABC transporter superfamily. UvrA family. Forms a heterotetramer with UvrB during the search for lesions.

The protein resides in the cytoplasm. Its function is as follows. The UvrABC repair system catalyzes the recognition and processing of DNA lesions. UvrA is an ATPase and a DNA-binding protein. A damage recognition complex composed of 2 UvrA and 2 UvrB subunits scans DNA for abnormalities. When the presence of a lesion has been verified by UvrB, the UvrA molecules dissociate. In Lactococcus lactis subsp. lactis (strain IL1403) (Streptococcus lactis), this protein is UvrABC system protein A.